We begin with the raw amino-acid sequence, 76 residues long: DNA-directed RNA polymerase subunit epsilon (76 aa).

The protein belongs to the RNA polymerase subunit epsilon family. As to quaternary structure, RNAP is composed of a core of 2 alpha, a beta and a beta' subunit. The core is associated with a delta subunit, and at least one of epsilon or omega. When a sigma factor is associated with the core the holoenzyme is formed, which can initiate transcription.

The catalysed reaction is RNA(n) + a ribonucleoside 5'-triphosphate = RNA(n+1) + diphosphate. In terms of biological role, a non-essential component of RNA polymerase (RNAP). The sequence is that of DNA-directed RNA polymerase subunit epsilon from Streptococcus sanguinis (strain SK36).